Consider the following 380-residue polypeptide: Endo-chitosanase C (380 aa).

The signal sequence occupies residues Met-1–Gly-22. Residues Cys-276 to Cys-304 form an R3-1 repeat. An R3-2 repeat occupies Glu-311–Cys-341. The stretch at Glu-348–Cys-378 is one R3-3 repeat.

Belongs to the glycosyl hydrolase 75 family.

The protein localises to the secreted. It catalyses the reaction Endohydrolysis of beta-(1-&gt;4)-linkages between D-glucosamine residues in a partly acetylated chitosan.. Functionally, chitosanase catalyzing the endo-type cleavage of chitosan, the deacylated form of chitin. Chitosanase may be crucial in the degradation of the deacetylated portion of chitin in the fungal cell wall. Chitoolisaccharides produced by the hydrolysis of partially N-acetylated chitosan are known to have many biological activities, including antibacterial activity, immune-enhancing effects, and elicitor activity. This is Endo-chitosanase C (csnC) from Aspergillus oryzae (Yellow koji mold).